Reading from the N-terminus, the 130-residue chain is Serum amyloid A protein (130 aa).

The N-terminal stretch at 1 to 18 (MKLFTGLILCSLVLGVHS) is a signal peptide. The residue at position 19 (Q19) is a Pyrrolidone carboxylic acid. The interval 86–130 (TDPLFKGTTSGQGQEDSRADQAANEWGRSGKDPNHFRPAGLPDKY) is disordered.

The protein belongs to the SAA family. Post-translationally, this protein is the precursor of amyloid protein A, which is formed by the removal of residues from the C-terminal end. In terms of tissue distribution, expressed by the liver; secreted in plasma.

It localises to the secreted. Functionally, major acute phase reactant. Apolipoprotein of the HDL complex. The polypeptide is Serum amyloid A protein (SAA1) (Bos taurus (Bovine)).